A 314-amino-acid polypeptide reads, in one-letter code: tRNA dimethylallyltransferase (314 aa).

An ATP-binding site is contributed by 12 to 19 (GPTASGKT). 14-19 (TASGKT) provides a ligand contact to substrate. 2 interaction with substrate tRNA regions span residues 37–40 (DSAL) and 162–166 (QRIIR).

Belongs to the IPP transferase family. In terms of assembly, monomer. Mg(2+) serves as cofactor.

It catalyses the reaction adenosine(37) in tRNA + dimethylallyl diphosphate = N(6)-dimethylallyladenosine(37) in tRNA + diphosphate. Catalyzes the transfer of a dimethylallyl group onto the adenine at position 37 in tRNAs that read codons beginning with uridine, leading to the formation of N6-(dimethylallyl)adenosine (i(6)A). In Acinetobacter baumannii (strain SDF), this protein is tRNA dimethylallyltransferase.